The sequence spans 477 residues: tRNA-2-methylthio-N(6)-dimethylallyladenosine synthase (477 aa).

In terms of domain architecture, MTTase N-terminal spans 9 to 129; sequence RKLHIKSYGC…LPQLLARAKT (121 aa). [4Fe-4S] cluster contacts are provided by Cys18, Cys54, Cys92, Cys170, Cys174, and Cys177. One can recognise a Radical SAM core domain in the interval 156 to 386; it reads RSRGISAFVT…QLQNLIDSQQ (231 aa). The 63-residue stretch at 391–453 folds into the TRAM domain; sequence RTALGRTIDV…RYSLFGTLAS (63 aa). A disordered region spans residues 454-477; sequence KPTSGEPSNHAATGGAQFQTTAGA. Residues 464–477 show a composition bias toward low complexity; sequence AATGGAQFQTTAGA.

This sequence belongs to the methylthiotransferase family. MiaB subfamily. Monomer. The cofactor is [4Fe-4S] cluster.

It localises to the cytoplasm. It carries out the reaction N(6)-dimethylallyladenosine(37) in tRNA + (sulfur carrier)-SH + AH2 + 2 S-adenosyl-L-methionine = 2-methylsulfanyl-N(6)-dimethylallyladenosine(37) in tRNA + (sulfur carrier)-H + 5'-deoxyadenosine + L-methionine + A + S-adenosyl-L-homocysteine + 2 H(+). Catalyzes the methylthiolation of N6-(dimethylallyl)adenosine (i(6)A), leading to the formation of 2-methylthio-N6-(dimethylallyl)adenosine (ms(2)i(6)A) at position 37 in tRNAs that read codons beginning with uridine. In Nitrobacter winogradskyi (strain ATCC 25391 / DSM 10237 / CIP 104748 / NCIMB 11846 / Nb-255), this protein is tRNA-2-methylthio-N(6)-dimethylallyladenosine synthase.